A 313-amino-acid polypeptide reads, in one-letter code: Olfactory receptor 4M1 (313 aa).

Topologically, residues 1 to 25 (METANYTKVTEFVLTGLSQTREVQL) are extracellular. Asparagine 5 is a glycosylation site (N-linked (GlcNAc...) asparagine). Residues 26–49 (VLFVIFLSFYLFILPGNILIICTI) traverse the membrane as a helical segment. At 50–57 (RLDPHLTS) the chain is on the cytoplasmic side. Residues 58-79 (PMYFLLANLALLDIWYSSITAP) traverse the membrane as a helical segment. Residues 80-100 (KMLIDFFVERKIISFGGCIAQ) are Extracellular-facing. Cysteine 97 and cysteine 189 form a disulfide bridge. The chain crosses the membrane as a helical span at residues 101–120 (LFFLHFVGASEMFLLTVMAY). The Cytoplasmic segment spans residues 121–139 (DRYAAICRPLHYATIMNRR). A helical membrane pass occupies residues 140 to 158 (LCCILVALSWMGGFIHSII). Residues 159-195 (QVALIVRLPFCGPNELDSYFCDITQVVRIACANTFPE) are Extracellular-facing. Residues 196 to 219 (ELVMICSSGLISVVCFIALLMSYA) form a helical membrane-spanning segment. At 220–237 (FLLALLKKHSGSGENTNR) the chain is on the cytoplasmic side. Residues 238-260 (AMSTCYSHITIVVLMFGPSIYIY) traverse the membrane as a helical segment. Residues 261 to 271 (ARPFDSFSLDK) lie on the Extracellular side of the membrane. The chain crosses the membrane as a helical span at residues 272-291 (VVSVFHTVIFPLLNPIIYTL). The Cytoplasmic segment spans residues 292–313 (RNKEVKAAMRKVVTKYILCEEK).

The protein belongs to the G-protein coupled receptor 1 family. In terms of tissue distribution, highly expressed in the testis and olfactory bulb.

The protein resides in the cell membrane. Olfactory receptor that acts as a receptor of Asprosin hormone, potentially at the surface of hepatocytes and may help to promote hepatocyte glucose release. The chain is Olfactory receptor 4M1 from Homo sapiens (Human).